A 442-amino-acid polypeptide reads, in one-letter code: UDP-N-acetylmuramate--L-alanine ligase (442 aa).

109–115 (GAHGKTS) provides a ligand contact to ATP.

Belongs to the MurCDEF family.

Its subcellular location is the cytoplasm. The enzyme catalyses UDP-N-acetyl-alpha-D-muramate + L-alanine + ATP = UDP-N-acetyl-alpha-D-muramoyl-L-alanine + ADP + phosphate + H(+). The protein operates within cell wall biogenesis; peptidoglycan biosynthesis. Its function is as follows. Cell wall formation. The polypeptide is UDP-N-acetylmuramate--L-alanine ligase (Streptococcus pyogenes serotype M18 (strain MGAS8232)).